The sequence spans 207 residues: MTSRKKVLLKVIILGDSGVGKTSLMNQYVNKKFSNQYKATIGADFLTKEVMVDDRLVTMQIWDTAGQERFQSLGVAFYRGADCCVLVFDVTAPNTFKTLDSWRDEFLIQASPRDPENFPFVVLGNKIDLENRQVATKRAQAWCYSKNNIPYFETSAKEAINVEQAFQTIARNALKQETEVELYNEFPEPIKLDKNERAKASAESCSC.

An N-acetylthreonine modification is found at T2. Residues S17, G18, V19, G20, K21, T22, S23, S34, N35, Y37, and T40 each contribute to the GTP site. Residue T22 participates in Mg(2+) binding. Residues 28 to 41 carry the Switch 1 motif; that stretch reads YVNKKFSNQYKATI. Mg(2+) contacts are provided by T40 and D63. Residue G66 participates in GTP binding. A Switch 2 motif is present at residues 67 to 82; sequence QERFQSLGVAFYRGAD. A Phosphoserine modification is found at S72. Positions 125, 126, 128, 156, and 157 each coordinate GTP. Residues K191 and K194 each participate in a glycyl lysine isopeptide (Lys-Gly) (interchain with G-Cter in ubiquitin) cross-link. 2 S-geranylgeranyl cysteine lipidation sites follow: C205 and C207. Cysteine methyl ester is present on C207.

The protein belongs to the small GTPase superfamily. Rab family. In terms of assembly, interacts with NTRK1/TRKA. Interacts with RILP. Interacts with PSMA7. Interacts with RNF115. Interacts with and FYCO1. Interacts with the PIK3C3/VPS34-PIK3R4 complex. The GTP-bound form interacts with OSBPL1A. The GTP-bound form interacts with RAC1. Interacts with CLN3. Interacts with CHM, the substrate-binding subunit of the Rab geranylgeranyltransferase complex. Interacts with C9orf72. Does not interact with HPS4 and the BLOC-3 complex (heterodimer of HPS1 and HPS4). Interacts with CLN5. Interacts with PLEKHM1 (via N- and C-terminus). Interacts with PRPH; the interaction is direct. Interacts with VPS13A. The GDP-bound form interacts with RIMOC1. Interacts with the MON1A-CCZ1B complex and this interaction is enhanced in the presence of RIMOC1. Interacts with VPS39 and VPS41. Forms a ternary complex with LAMP2 and RUFY4; the interaction with LAMP2 is mediated by RUFY4 (via RUN and coiled coil domains). Requires Mg(2+) as cofactor. Post-translationally, deubiquitination at Lys-191 and Lys-194 by USP32. In terms of processing, phosphorylated at Ser-72 by LRRK1; phosphorylation is dependent on protein kinase C (PKC) activation of LRRK1. Prenylated. Prenylation is required for association with cellular membranes. As to expression, expressed in osteoclasts and in neurons.

The protein resides in the cytoplasmic vesicle. Its subcellular location is the phagosome membrane. The protein localises to the late endosome membrane. It localises to the lysosome membrane. It is found in the melanosome membrane. The protein resides in the autophagosome membrane. Its subcellular location is the lipid droplet. The protein localises to the endosome membrane. It localises to the mitochondrion membrane. The catalysed reaction is GTP + H2O = GDP + phosphate + H(+). Regulated by guanine nucleotide exchange factors (GEFs) which promote the exchange of bound GDP for free GTP. Regulated by GTPase activating proteins (GAPs) which increase the GTP hydrolysis activity. Inhibited by GDP dissociation inhibitors (GDIs). Its function is as follows. The small GTPases Rab are key regulators of intracellular membrane trafficking, from the formation of transport vesicles to their fusion with membranes. Rabs cycle between an inactive GDP-bound form and an active GTP-bound form that is able to recruit to membranes different sets of downstream effectors directly responsible for vesicle formation, movement, tethering and fusion. In its active state, RAB7A binds to a variety of effector proteins playing a key role in the regulation of endo-lysosomal trafficking. Governs early-to-late endosomal maturation, microtubule minus-end as well as plus-end directed endosomal migration and positioning, and endosome-lysosome transport through different protein-protein interaction cascades. Also plays a central role in growth-factor-mediated cell signaling, nutrient-transporter-mediated nutrient uptake, neurotrophin transport in the axons of neurons and lipid metabolism. Also involved in regulation of some specialized endosomal membrane trafficking, such as maturation of melanosomes, pathogen-induced phagosomes (or vacuoles) and autophagosomes. Plays a role in the maturation and acidification of phagosomes that engulf pathogens, such as S.aureus and Mycobacteria. Plays a role in the fusion of phagosomes with lysosomes. In concert with RAC1, plays a role in regulating the formation of RBs (ruffled borders) in osteoclasts. Controls the endosomal trafficking and neurite outgrowth signaling of NTRK1/TRKA. Regulates the endocytic trafficking of the EGF-EGFR complex by regulating its lysosomal degradation. Involved in the ADRB2-stimulated lipolysis through lipophagy, a cytosolic lipase-independent autophagic pathway. Required for the exosomal release of SDCBP, CD63 and syndecan. Required for vesicular trafficking and cell surface expression of ACE2. May play a role in PRPH neuronal intermediate filament assembly. The chain is Ras-related protein Rab-7a from Rattus norvegicus (Rat).